A 195-amino-acid polypeptide reads, in one-letter code: Pyruvoyl-dependent arginine decarboxylase AaxB (195 aa).

Serine 53 is subject to Pyruvic acid (Ser).

The protein belongs to the pyruvoyl-dependent arginine decarboxylase family. Trimer of an alpha-beta dimer. It depends on pyruvate as a cofactor.

It is found in the cytoplasm. It carries out the reaction L-arginine + H(+) = agmatine + CO2. Part of the AaxABC system, catalyzes the decarboxylation of L-arginine. The arginine uptake by the bacterium in the macrophage may be a virulence factor against the host innate immune response. This Chlamydia trachomatis serovar D (strain ATCC VR-885 / DSM 19411 / UW-3/Cx) protein is Pyruvoyl-dependent arginine decarboxylase AaxB (aaxB).